The primary structure comprises 200 residues: TATA-box-binding protein (200 aa).

2 consecutive repeat copies span residues 25-101 (LQNI…ARII) and 115-192 (IQNI…YPVL).

The protein belongs to the TBP family. Belongs to the TFIID complex together with the TBP-associated factors (TAFs). Binds DNA as monomer.

It is found in the nucleus. Its function is as follows. General transcription factor that functions at the core of the DNA-binding multiprotein factor TFIID. Binding of TFIID to the TATA box is the initial transcriptional step of the pre-initiation complex (PIC), playing a role in the activation of eukaryotic genes transcribed by RNA polymerase II. In Mesembryanthemum crystallinum (Common ice plant), this protein is TATA-box-binding protein.